Here is a 275-residue protein sequence, read N- to C-terminus: 4,5-DOPA dioxygenase extradiol 1 (275 aa).

Positions 22, 60, 182, and 236 each coordinate Zn(2+).

This sequence belongs to the DODA-type extradiol aromatic ring-opening dioxygenase family. The cofactor is Zn(2+).

It carries out the reaction L-dopa + O2 = 4-(L-alanin-3-yl)-2-hydroxy-cis,cis-muconate 6-semialdehyde + H(+). The protein operates within pigment biosynthesis; betalain biosynthesis. Its function is as follows. Opens the cyclic ring of dihydroxy-phenylalanine (DOPA) between carbons 4 and 5, thus producing an unstable seco-DOPA that rearranges nonenzymatically to betalamic acid. The sequence is that of 4,5-DOPA dioxygenase extradiol 1 from Beta vulgaris (Sugar beet).